Reading from the N-terminus, the 86-residue chain is Small ribosomal subunit protein uS17 (86 aa).

The protein belongs to the universal ribosomal protein uS17 family. Part of the 30S ribosomal subunit.

In terms of biological role, one of the primary rRNA binding proteins, it binds specifically to the 5'-end of 16S ribosomal RNA. This is Small ribosomal subunit protein uS17 from Helicobacter pylori (strain P12).